The following is a 274-amino-acid chain: tRNA-cytidine(32) 2-sulfurtransferase (274 aa).

The short motif at 40-45 is the PP-loop motif element; the sequence is SGGKDS. Residues Cys-115, Cys-118, and Cys-206 each contribute to the [4Fe-4S] cluster site.

The protein belongs to the TtcA family. In terms of assembly, homodimer. Mg(2+) serves as cofactor. [4Fe-4S] cluster is required as a cofactor.

The protein localises to the cytoplasm. The enzyme catalyses cytidine(32) in tRNA + S-sulfanyl-L-cysteinyl-[cysteine desulfurase] + AH2 + ATP = 2-thiocytidine(32) in tRNA + L-cysteinyl-[cysteine desulfurase] + A + AMP + diphosphate + H(+). Its pathway is tRNA modification. Functionally, catalyzes the ATP-dependent 2-thiolation of cytidine in position 32 of tRNA, to form 2-thiocytidine (s(2)C32). The sulfur atoms are provided by the cysteine/cysteine desulfurase (IscS) system. The polypeptide is tRNA-cytidine(32) 2-sulfurtransferase (Pseudomonas syringae pv. syringae (strain B728a)).